Consider the following 329-residue polypeptide: Delta(7)-sterol 5(6)-desaturase erg32 (329 aa).

Helical transmembrane passes span 67-87 (LFLI…SFAY) and 149-169 (FYLF…IYWI). The 126-residue stretch at 156-281 (ALFLLFSDFL…FFTLFDRLCS (126 aa)) folds into the Fatty acid hydroxylase domain. The short motif at 170-175 (HRALHH) is the Histidine box-1 element. The short motif at 183–187 (HKLHH) is the Histidine box-2 element. The helical transmembrane segment at 210–230 (LPYHMFPFFFPLNKYVYLLLF) threads the bilayer. The Histidine box-3 motif lies at 257–262 (HHAAHH).

The protein belongs to the sterol desaturase family. Requires Fe cation as cofactor.

The protein localises to the endoplasmic reticulum membrane. It is found in the golgi apparatus membrane. The enzyme catalyses episterol + 2 Fe(II)-[cytochrome b5] + O2 + 2 H(+) = 5-dehydroepisterol + 2 Fe(III)-[cytochrome b5] + 2 H2O. It functions in the pathway steroid metabolism; ergosterol biosynthesis. In terms of biological role, C-5 sterol desaturase; part of the third module of ergosterol biosynthesis pathway that includes by the late steps of the pathway. Erg31 and erg32 catalyze the introduction of a C-5 double bond in the B ring to produce 5-dehydroepisterol. The third module or late pathway involves the ergosterol synthesis itself through consecutive reactions that mainly occur in the endoplasmic reticulum (ER) membrane. Firstly, the squalene synthase erg9 catalyzes the condensation of 2 farnesyl pyrophosphate moieties to form squalene, which is the precursor of all steroids. Secondly, squalene is converted into lanosterol by the consecutive action of the squalene epoxidase erg1 and the lanosterol synthase erg7. The lanosterol 14-alpha-demethylase erg11/cyp1 catalyzes C14-demethylation of lanosterol to produce 4,4'-dimethyl cholesta-8,14,24-triene-3-beta-ol. In the next steps, a complex process involving various demethylation, reduction and desaturation reactions catalyzed by the C-14 reductase erg24 and the C-4 demethylation complex erg25-erg26-erg27 leads to the production of zymosterol. Erg28 likely functions in the C-4 demethylation complex reaction by tethering erg26 and Erg27 to the endoplasmic reticulum or to facilitate interaction between these proteins. Then, the sterol 24-C-methyltransferase erg6 catalyzes the methyl transfer from S-adenosyl-methionine to the C-24 of zymosterol to form fecosterol. The C-8 sterol isomerase erg2 catalyzes the reaction which results in unsaturation at C-7 in the B ring of sterols and thus converts fecosterol to episterol. The sterol-C5-desaturases erg31 and erg32 then catalyze the introduction of a C-5 double bond in the B ring to produce 5-dehydroepisterol. The C-22 sterol desaturase erg5 further converts 5-dehydroepisterol into ergosta-5,7,22,24(28)-tetraen-3beta-ol by forming the C-22(23) double bond in the sterol side chain. Finally, ergosta-5,7,22,24(28)-tetraen-3beta-ol is substrate of the C-24(28) sterol reductase erg4 to produce ergosterol. In the genus Schizosaccharomyces, a second route exists between lanosterol and fecosterol, via the methylation of lanosterol to eburicol by erg6, followed by C14-demethylation by erg11/cyp1 and C4-demethylation by the demethylation complex erg25-erg26-erg27. The chain is Delta(7)-sterol 5(6)-desaturase erg32 from Schizosaccharomyces pombe (strain 972 / ATCC 24843) (Fission yeast).